A 475-amino-acid chain; its full sequence is Putative F-box protein At3g58960 (475 aa).

In terms of domain architecture, F-box spans 1 to 49; sequence MDRISSLSNDIISNIVSFLSAKDAAVASVLSKRWQNIYTIVPNLEFDNT.

This chain is Putative F-box protein At3g58960, found in Arabidopsis thaliana (Mouse-ear cress).